The primary structure comprises 1051 residues: Ubiquitin carboxyl-terminal hydrolase 28 (1051 aa).

The disordered stretch occupies residues D60 to A82. The residue at position 67 (S67) is a Phosphoserine. In terms of domain architecture, UIM spans D97 to I116. K99 participates in a covalent cross-link: Glycyl lysine isopeptide (Lys-Gly) (interchain with G-Cter in SUMO2). A compositionally biased stretch (basic and acidic residues) spans R121–K135. Positions R121–K140 are disordered. A USP domain is found at V162–D655. C171 acts as the Nucleophile in catalysis. S376 is modified (phosphoserine). The segment at D483–V538 is disordered. Polar residues-rich tracts occupy residues K487 to S505 and P519 to E528. Position 555 is a phosphoserine (S555). The active-site Proton acceptor is the H605. The tract at residues E703–H735 is disordered. Over residues E713–P730 the composition is skewed to low complexity. S720 bears the Phosphoserine mark. Phosphothreonine is present on T1022.

It belongs to the peptidase C19 family. USP28 subfamily. Interacts with ZNF304. Interacts with PRKD1. Interacts with TP53BP1. Interacts with FBXW7; following DNA damage, dissociates from FBXW7 leading to degradation of MYC. Degraded upon nickel ion level or hypoxia exposure. In terms of processing, phosphorylated upon DNA damage at Ser-67 and Ser-720, by ATM or ATR. Phosphorylated by PRKD1.

Its subcellular location is the nucleus. The protein resides in the nucleoplasm. The enzyme catalyses Thiol-dependent hydrolysis of ester, thioester, amide, peptide and isopeptide bonds formed by the C-terminal Gly of ubiquitin (a 76-residue protein attached to proteins as an intracellular targeting signal).. Its function is as follows. Deubiquitinase involved in DNA damage response checkpoint and MYC proto-oncogene stability. Involved in DNA damage induced apoptosis by specifically deubiquitinating proteins of the DNA damage pathway such as CLSPN. Also involved in G2 DNA damage checkpoint, by deubiquitinating CLSPN, and preventing its degradation by the anaphase promoting complex/cyclosome (APC/C). In contrast, it does not deubiquitinate PLK1. Specifically deubiquitinates MYC in the nucleoplasm, leading to prevent MYC degradation by the proteasome: acts by specifically interacting with FBXW7 (FBW7alpha) in the nucleoplasm and counteracting ubiquitination of MYC by the SCF(FBXW7) complex. Deubiquitinates ZNF304, hence preventing ZNF304 degradation by the proteasome and leading to the activated KRAS-mediated promoter hypermethylation and transcriptional silencing of tumor suppressor genes (TSGs) in a subset of colorectal cancers (CRC) cells. This Mus musculus (Mouse) protein is Ubiquitin carboxyl-terminal hydrolase 28 (Usp28).